Consider the following 410-residue polypeptide: ORC1-type DNA replication protein 4 (410 aa).

ATP-binding positions include 73–77 (TGKSL), Tyr220, and Arg232.

The protein belongs to the CDC6/cdc18 family.

In terms of biological role, involved in regulation of DNA replication. The sequence is that of ORC1-type DNA replication protein 4 (orc4) from Halobacterium salinarum (strain ATCC 700922 / JCM 11081 / NRC-1) (Halobacterium halobium).